The chain runs to 461 residues: Tol-Pal system protein TolB 2 (461 aa).

A signal peptide spans 1-20 (MKIRHLLLLAGLVSAPAIVA). Positions 28 to 47 (SSSAAQASGDDDGGLTGSVS) are disordered.

This sequence belongs to the TolB family. In terms of assembly, the Tol-Pal system is composed of five core proteins: the inner membrane proteins TolA, TolQ and TolR, the periplasmic protein TolB and the outer membrane protein Pal. They form a network linking the inner and outer membranes and the peptidoglycan layer.

It is found in the periplasm. In terms of biological role, part of the Tol-Pal system, which plays a role in outer membrane invagination during cell division and is important for maintaining outer membrane integrity. In Novosphingobium aromaticivorans (strain ATCC 700278 / DSM 12444 / CCUG 56034 / CIP 105152 / NBRC 16084 / F199), this protein is Tol-Pal system protein TolB 2.